The following is a 262-amino-acid chain: Small ribosomal subunit protein uS2 (262 aa).

Residues 228–262 are disordered; that stretch reads VSNEEVAAEQNIDLDESKEATEAETTEENTSVESN.

Belongs to the universal ribosomal protein uS2 family.

This is Small ribosomal subunit protein uS2 from Staphylococcus saprophyticus subsp. saprophyticus (strain ATCC 15305 / DSM 20229 / NCIMB 8711 / NCTC 7292 / S-41).